The sequence spans 581 residues: Meiotic PUF family protein 1 (581 aa).

The region spanning 225-580 is the PUM-HD domain; it reads FPNGTTEPFE…RIAALVEKSK (356 aa). 8 Pumilio repeats span residues 291–326, 327–362, 363–398, 403–438, 439–474, 475–510, 518–554, and 555–581; these read TILPFSVTLMKNKFGNFLIQKCFEYSTEAQLQSFSY, FLKKHVKELSIDAFGSHVLQKSLEIYPERFTNNLIE, ELIECLPATLMQRHSCHVWQKFFETRRKSLVDGIFD, KMQGKWLQVSVSEMGSLVVQTIFENCKEKDKRTCLD, EIINNMDQIICGQWGNWVIQHIIEHGSEPDKQRILN, SLLKEVESYSTNRYASKVVERALRVCHVTFFDRYVK, ELPTIFLQEIASNQYGNYIVQYLLQVATPSQINLMAE, and HLKKHMVSLRGHKYGQRIAALVEKSKS.

Functionally, RNA-binding protein essential for meiotic progression. In Schizosaccharomyces pombe (strain 972 / ATCC 24843) (Fission yeast), this protein is Meiotic PUF family protein 1 (mpf1).